The following is a 1161-amino-acid chain: PAN2-PAN3 deadenylation complex catalytic subunit pan2 (1161 aa).

2 WD repeats span residues 20–59 (GLPTAATTIAFDDVSELLWAGNEFGRITSFYGPELQRYTS) and 276–315 (ANVSFMLGIDISPSGEALAINDAECSIHLWGSPSKIHFNE). Residues 316–452 (MSKEVEFADV…GAKLNGEAED (137 aa)) form a linker region. The USP domain occupies 453–822 (DPLLKYSNVE…SPCILAYQAK (370 aa)). The 179-residue stretch at 871-1049 (VALDTEFVDL…IEDARMALRL (179 aa)) folds into the Exonuclease domain. Residues aspartate 874, glutamate 876, aspartate 983, and aspartate 1042 each contribute to the a divalent metal cation site. The stretch at 1009–1060 (NRRLSLRYLAWAVFKEYIQEEPADNNQGHDSIEDARMALRLWKKFQEYEDAG) is one WD 4 repeat. Residues 1092 to 1161 (RPGTAVTMQN…GDFFGGSPLK (70 aa)) form a disordered region. Over residues 1097 to 1110 (VTMQNSSGRNTPST) the composition is skewed to polar residues. Positions 1116 to 1129 (AATATATTSAPATP) are enriched in low complexity. Gly residues predominate over residues 1145–1155 (TFGGPGAGDFF).

Belongs to the peptidase C19 family. PAN2 subfamily. As to quaternary structure, forms a heterotrimer with an asymmetric homodimer of the regulatory subunit pan3 to form the poly(A)-nuclease (PAN) deadenylation complex. It depends on a divalent metal cation as a cofactor.

It is found in the cytoplasm. It catalyses the reaction Exonucleolytic cleavage of poly(A) to 5'-AMP.. Positively regulated by the regulatory subunit pan3. In terms of biological role, catalytic subunit of the poly(A)-nuclease (PAN) deadenylation complex, one of two cytoplasmic mRNA deadenylases involved in mRNA turnover. PAN specifically shortens poly(A) tails of RNA and the activity is stimulated by poly(A)-binding protein pab1. PAN deadenylation is followed by rapid degradation of the shortened mRNA tails by the CCR4-NOT complex. Deadenylated mRNAs are then degraded by two alternative mechanisms, namely exosome-mediated 3'-5' exonucleolytic degradation, or deadenylation-dependent mRNA decaping and subsequent 5'-3' exonucleolytic degradation by xrn1. May also be involved in post-transcriptional maturation of mRNA poly(A) tails. The sequence is that of PAN2-PAN3 deadenylation complex catalytic subunit pan2 from Neosartorya fischeri (strain ATCC 1020 / DSM 3700 / CBS 544.65 / FGSC A1164 / JCM 1740 / NRRL 181 / WB 181) (Aspergillus fischerianus).